The chain runs to 443 residues: MSEMTPREIVHELNRHIIGQDKAKRSVAIALRNRWRRMQLEESLRVEVTPKNILMIGPTGVGKTEIARRLAKLANAPFIKVEATKFTEVGYVGKEVETIIRDLTDVAVKMTHQQAMEKVKFRAEEQAEERILDALLPPARDSWGQVEQKEDTSNTRQIFRKKLREGQLDDKEIEIDVAAPQMGVEIMAPPGMEEMTNQLQGMFQNLAGDTKKKRKLKIKDAMKALAEEEAAKLVNQEELKEAAIFNVENNGIVFIDEIDKICKRGESSGPDVSREGVQRDLLPLIEGSTVSTKHGMVKTDHILFVASGAFQVAKPSDLIPELQGRLPIRVELEALSSNDFKRILTEPKASLTEQYIALMKTEDVDIEFTEDGITRIAEAAWTVNETTENIGARRLHTVMERLMDEISYDAAEQSGAKFVIDAAYVQARLGDTIEDEDLSRFIL.

ATP-binding positions include isoleucine 18, 60-65 (GVGKTE), aspartate 256, glutamate 321, and arginine 393.

Belongs to the ClpX chaperone family. HslU subfamily. A double ring-shaped homohexamer of HslV is capped on each side by a ring-shaped HslU homohexamer. The assembly of the HslU/HslV complex is dependent on binding of ATP.

It is found in the cytoplasm. In terms of biological role, ATPase subunit of a proteasome-like degradation complex; this subunit has chaperone activity. The binding of ATP and its subsequent hydrolysis by HslU are essential for unfolding of protein substrates subsequently hydrolyzed by HslV. HslU recognizes the N-terminal part of its protein substrates and unfolds these before they are guided to HslV for hydrolysis. This Vibrio parahaemolyticus serotype O3:K6 (strain RIMD 2210633) protein is ATP-dependent protease ATPase subunit HslU.